The primary structure comprises 144 residues: D-aminoacyl-tRNA deacylase (144 aa).

The Gly-cisPro motif, important for rejection of L-amino acids motif lies at 136-137 (GP).

It belongs to the DTD family. In terms of assembly, homodimer.

The protein resides in the cytoplasm. It catalyses the reaction glycyl-tRNA(Ala) + H2O = tRNA(Ala) + glycine + H(+). The enzyme catalyses a D-aminoacyl-tRNA + H2O = a tRNA + a D-alpha-amino acid + H(+). Its function is as follows. An aminoacyl-tRNA editing enzyme that deacylates mischarged D-aminoacyl-tRNAs. Also deacylates mischarged glycyl-tRNA(Ala), protecting cells against glycine mischarging by AlaRS. Acts via tRNA-based rather than protein-based catalysis; rejects L-amino acids rather than detecting D-amino acids in the active site. By recycling D-aminoacyl-tRNA to D-amino acids and free tRNA molecules, this enzyme counteracts the toxicity associated with the formation of D-aminoacyl-tRNA entities in vivo and helps enforce protein L-homochirality. This Vibrio atlanticus (strain LGP32) (Vibrio splendidus (strain Mel32)) protein is D-aminoacyl-tRNA deacylase.